We begin with the raw amino-acid sequence, 4749 residues long: MKPHSQTSPPSLPMPSTSCRPGQTQKPKAWNWHLDPELWARSVRQQLNTCLHFILEEKKNPWFYTLQSGLVGCSCSGQEHSWDCQMKQEDLKAVVESEQRTLLKLLLSELQSLFSAVMQDGSCEAWRYLHAVLGLLPPYREMLAGQLELLPFLEQLYCWAPKVQARLELDLLDAIDKAFPPDSSLLHSSSHVDCGLWMKRFHRGPPCSACPFVKAQWDRQQKKELATWLRPLTLPELQHCLGIVGAEVALEETPWLDSLSLLPLALATDIPVQYESSDTEQAEGEPAGRKLQVASEAPEEKALKKKSSRTPVLRSQVKSLLERDWTQKKIHFLYLNVVSDRHFNPYKLVAVPPDKVNPEHYIFSPFGILHIHPVEGSEAMTLGTWHRDCALWRELQRIPFFKNCLLRKALTCWKKNVRLCGLHRIQTFLKTHLLSAIPHFGAGMLHINRLLQEFRSVSWLPKEPDRSYELVDLQKAIAKENHKALRVLCHFLNLCTSILQLIHEDTYQMQQGLQERVQNWNRIRKGQGSIYLQRTLCRHLEKKLKQAETWLLKLGKFARLIDYMICQNLVSILEDEISSFIANTLQAPRQNPFLLSQLVFDDNGQLSPMPRVESIIQGLIKSLQSIKTSALKVLQSTDLRTSRDLLYSEDNKDQDSNAEFLMPKFHGKASDAVRLFCGPNVGYVWPWKSHAITDVLEVRGHKLRGQFLHPNYDHVQEDLDKNAGIQQALAVQQSLLEDMRQEVQEFCNKHKWVEGIYEFLKAWSSQKLEDLRGSPINNYVNLVIQLKKWQERVSNMSVELLTKGKLLFLSGHDVQEELGSKLNNMRKNILEQAQNECWSRNQQLMTELTEFLRVFQTISSDIHAIAQCSQKLSEANEQYCQLEERVEYVRSLHDLIRNHCALFIAENETLDIALLDLWEAFQFERSQVSEFLLSKQHAIVPRLQQLMAAALAELEGLLAKALSGPFMDPSQEQRSTEQQLGALEHQFLNILNNFNALCNAYCTFTGYKKPMSPPASGNRPIVLQQRIWRLYRIISENLGEWKCVAFSKFNLSMAREKTDAWLTEAVRLSTALGLQSPVLQRCMRMLEEFRAYLPLLIKLGNLQLQDLNTQSLLRALGLGSLRSLDLLTLGQMLNYPLLEFAERINQVWQYDKERIHAQEILQQMQQYWEGRQLRLLNFILHVPYKPPTSERSKRPALRSPQWELVGKDSGTFLLSDYSSLQDAIQNSLQALFKILAIQKSGQLHKIALEWVAIMYGLGALLEVWVAFQQKWIFLNKVLHEMKIEFPAPELNARFKAMDDQYRTLMRISVADPMVLSLILPNTKRSPYFQGQHLQQMLKAGSGELEAIIMALEDVLYGVCANFPRLFFLSDSELVALLAAPLDTREAQLWAQRCFPHIKAVNFRSKSTKKKINQDSSSSTESAETIAVLAAGGEEVKLQEPLPLHTDLPKWLASLEKCLRFIIVNLLQSCVATRLAQGPSLIKALKAMPQQRQMPMQVYVQHWLDAVQVFPWQCILVAEEVVWRAEMEEALLESRTMHMRSVHVHNLEVLVQFIRSQRSSQDGKSLPSVRQTSLFSTLLVKAVTHRDIAQLLEKNQVSDLTDFHWVRQLKYHLGSSHLNLKSPVQCLTTIASTEPSVSPAACWIDVLGRSFMYNYEYMGPKLGPLPSLMHERQVFILLMALDEVAYGAILGRDGLGKAETVNSLAWTLGRQLVIMPCLPQIEFQCLRNYLNGALQSGAWLLLENVNQLPSSLLSALGQRLDELHYLYAPLYQKASKNISTINPTKPLLLGGGFFEKHQVSMRLGFGCFLTLHSLGPDIPANLHLLLRPVALALPDLQRVAELNLLGAGVQDASQMASRLSKLFSLERELVSGNLPCRLPLLKQVLEHTIQTLNTSQEKKSQQPYDPAASEEAALLRALLHSPLFSILDGLRLQKLQELLCGIFPNASHVLAEPVSHRLIKSVVVEELQQLGLFPASNTVTSLEQLSQALSRASGILLLGPAGSGKSTCWRSLFKIQNRLAAMEHTSTKGFQSVEIVHLYPSVLNSKEYLGWSEGPSWHYGIFPKLLHAAPYCKSVGSEEPSEKFTGIQQWIICDGAPNHAWTDSVTCLLRDPPQLSLPNGQQIARPLGTFFLIEVAEAAGMSPTVLGRCALVWCSGEQTWHSMLSVLMASLPHEYHLQQETITEFNYLAEVLVPSVLRFLTRIGASSQLQVHGHQAVCPGVAEVTSLVRILRALLDPLLHLFEEEKSYTKEDFSGSDLVTQNFKSSKTRVQSDRVNVNKKQRRHLLAISSFLFAIIWSFGAHLPSRHWPLFDDFMKKSISSLPNYPEPPPSALVFDLHVNFEDGTLVPFTGQYLSTHVKGNLGSFQPSSQTEQLLYVVDLLLSNGQPVLLAGEIATGKSAFVEVLVKPNYPVIHSPIHPALNSTHLRHLLSRGVHGQTQASSIPGHHQDSKGSILFLMEDLHLATFDPEKNCQPVLETLRQAMEGTIYAHNTLELQTLQTTVNFLATATVPGYSERPLCPRLYRLFTVLALNSMTQDTLLSRHVPSIQAWLERFPSVEREHTLARALVRASVEAWEAVCKCFMPSPLRPHYRFSPHSVSHILGSLQLLPTRMGSRGFAETFHHQEYLRRVSGLRGTRLTIMMSMRVMVRLWLHEAQRTFCDRLDSDRERSHCAKLLLEVAQNVFCGGPGSESLAKDCEEEEVEEEKVPEVESEEEIAQWETLSNSDSGSEEEEDPYGLQATTGSFLSENSLAPFPRKSVNKENTENVSQMAEQEEDIRDSSSKLQSKTPKHEWQMAPQMDLSLPLLLPVLLFYPQESPSDLVFSLELTLGSNFESPNLYLERQWENLEKQLVATAVRLKMNSGFSQCPVMVQHVAHLVRVLARPQQHALLLSEFRGTGRYTAIILASSICQAHLHYLSVESEEAIFQCLRDASWHAGLLNQPVALLVPEGVNVAIFCRLLALATSGSFPDQYTEADLDNIEEHFPKENIANKHAIKRDTILNRFYQQVCNNLHMFFMVGDNQAQNQLAPTLFLNLLQLTIASVERYEPWDQASLVRIAQFCLENDHSLPLDDGSLKYPDFKHLIPNVANIMARIHVSSACYHKHMCPALPLVTPKTFQDFLDMFLQQQQQMVLQMRMRASRIQTALKTLRLMVERHSTQTSLLTDLEAQLKGSYKSVGICQGQLEQSKIMYRQKMIECQHQESLIENLVRQHDALKAQQEVFLEQMGKAFVGPLSQLRVADFEEIRSYRAPPESVVKVTDALCDLFHQETGWSSAKQLLCTEDFYQELVFFPKEKLTDSELVKLNEALRAPGMSDAALRSVSIPAANLAVWLWAVLRYGLAQRRGLPTGLLLRQVDATLAREQARLGQFQFQAHDLLEQTRSLTKKLEDAQVSHNHVMETLNQAQCGNFQKWPMESALLTPMHMWTTQLQKLQEQAKTVFGDALLCSAAIIYLGPFPPQRRQELLEKWLSLCQGSEEALDPDDVARALRQKSVGVPKNPLLPTRTPFSILTLLSYGSELHQWDRDLKPQAKSARLLGLLLRSHIHFSSSRWPLLIDPSNQAIMWLNPLPPKQNRSLEPSPKESKEKFHVTKQDSGDNTEDELEDENNEEEDEANEQRKEQKAEENKIQGENEQEVQETEKENEPESSGSHSSLPSETQSLPSCLTVLSGTDPELGPQLLEAAANGLPVLLTNVELSLGCQELQWLLSKKNLSPPSVQPGFCLFLSTTFPIHALSRVLGFEMLKGLNVLDLGLNMEILEEQMLHEILCRERPELETRWQDLKIRAADTYEAMKADEEQLLVTLLRQNQKRQKPSKFLRKMVRTQAKICQLNAQMEELEDQKQEVVALWAPYRPVAYHGMAMVEALSPLQNLLPSFCMTSENWLAVIRRAIDSMKSYDSYRGEDLPSHLLRLKIHLARQLLTNTVVALGLIQTPLVGAFGALAMLQVTTKTPKLERLALWPGLSASPSSGHNMQIPGVIRPAWLSSKAWEECGALELLPPFAGLCESLAGHSGVWQDYLSLSSTVLGPAPGPNSEPLSLFQKLILWRVLRPDCLAGALADLTTSLLGRPLDENLGAPTMIFEHIQPTQPILILLPPPGHPTATLHPVTVIRKLAANHEKPQHLHVIALGSEDWDPVSTVVNTLCQAMLQGHWLVLDNCHLMPFWPRELLQPLQGLLDRARVVSDSELLAEPESRSVVTVHRDFRLWLIVPTEASTSLPGMLTQSSMPVFWNQSLELGRILIDSLDSQQGLCTQPLTQTLPLFFLHGLLLHRQLYGLKLQAHRGRWSQVTLTRALQIQEQLWASLGNPSAALLELTASVLYGGSLGDLEDREALVSLTRTCLNPRNMNWDQPHTPQYLLATLMPSPELGELDARTDCKAQMHLLPTPPEPRTCGLNEAPQAWLMRRQSRVLLNALQKCSSTWVPTVCGGIAQRKERQLQQRLAQAKKRLVALQALLTNNRIRSGQCVTPWAVLGPNARRPLEGFLETEVLELKHLVGTLLCDLDCLLQQLKGGTPCTSSRCAKVAQALWAGHLPQPWRSHALAGSQLPWLWLRQLSRRGHLLIRYLDSGMSENANKPERIFHLSAFRHPGRLLLALRWEAVLENSVHNPNLPGHQDSISGSLPPKWQELSNHPLHIWVENGPNPKVPKMGLLLTGLQLQHAEWDQTDGALQDSFSSQPCPLPPVSISTQARRGKDAPVSAGLGMYSCPVYMTGPFGTTKLHSKNILMHLPLPTRLSPDTCIQRRVHVCSPTLT.

The segment covering 1 to 18 (MKPHSQTSPPSLPMPSTS) has biased composition (low complexity). 3 disordered regions span residues 1–27 (MKPHSQTSPPSLPMPSTSCRPGQTQKP), 275–308 (ESSDTEQAEGEPAGRKLQVASEAPEEKALKKKSS), and 2690–2785 (ESLA…KLQS). Residues 2696–2716 (CEEEEVEEEKVPEVESEEEIA) are compositionally biased toward acidic residues. The span at 2738 to 2749 (QATTGSFLSENS) shows a compositional bias: polar residues. Residues 3197–3224 (CQHQESLIENLVRQHDALKAQQEVFLEQ) adopt a coiled-coil conformation. Positions 3568–3667 (PPKQNRSLEP…SLPSCLTVLS (100 aa)) are disordered. Basic and acidic residues predominate over residues 3578–3593 (SPKESKEKFHVTKQDS). A coiled-coil region spans residues 3594–3636 (GDNTEDELEDENNEEEDEANEQRKEQKAEENKIQGENEQEVQE). Acidic residues predominate over residues 3595 to 3612 (DNTEDELEDENNEEEDEA). Positions 3613 to 3628 (NEQRKEQKAEENKIQG) are enriched in basic and acidic residues. Residues 3644–3655 (ESSGSHSSLPSE) are compositionally biased toward low complexity. The segment covering 3656–3667 (TQSLPSCLTVLS) has biased composition (polar residues). Coiled coils occupy residues 3818–3838 (MVRTQAKICQLNAQMEELEDQ) and 4431–4451 (ERQLQQRLAQAKKRLVALQAL).

It belongs to the dynein heavy chain family. In terms of tissue distribution, expressed in spermatozoa (at protein level).

The protein localises to the cell projection. It is found in the cilium. Its subcellular location is the flagellum. In terms of biological role, essential for the normal function of sperm flagella axonemes. In Mus musculus (Mouse), this protein is Dynein heavy chain domain-containing protein 1 (Dnhd1).